A 342-amino-acid chain; its full sequence is MLDTQYSQYIQHRIDQKTKPLGALGLLEKVAHQLALIQSQGKETAVEHIELNKPRIIIFAGDHGIADEGVSIAPSAVTQQMVLNFLSGGAAINCFCAVNNVEITVVDTGILLPVESDSDMLISQRLGTRTNNFANEAAMSLETVERGIELGTELVSRTISNGTNIIMFGEMGIGNTSSASAILSALANRTADECVGLGTGINNEQLARKVAVVKQGIARCINPDAKEVLSQVGGYEIVQMVGGFLGAYENRTPVLVDGFIVSVAAYVATLIEPSCRDYMIFAHRSEESGHKILLELLDAEPLLDLGLRLGEGTGAALAMPIIRAAAEFYNNMASFASAGVTV.

Glutamate 311 (proton acceptor) is an active-site residue.

It belongs to the CobT family.

The catalysed reaction is 5,6-dimethylbenzimidazole + nicotinate beta-D-ribonucleotide = alpha-ribazole 5'-phosphate + nicotinate + H(+). It functions in the pathway nucleoside biosynthesis; alpha-ribazole biosynthesis; alpha-ribazole from 5,6-dimethylbenzimidazole: step 1/2. Catalyzes the synthesis of alpha-ribazole-5'-phosphate from nicotinate mononucleotide (NAMN) and 5,6-dimethylbenzimidazole (DMB). This chain is Nicotinate-nucleotide--dimethylbenzimidazole phosphoribosyltransferase, found in Vibrio atlanticus (strain LGP32) (Vibrio splendidus (strain Mel32)).